The chain runs to 286 residues: Formamidopyrimidine-DNA glycosylase (286 aa).

The active-site Schiff-base intermediate with DNA is P2. The active-site Proton donor is E3. The active-site Proton donor; for beta-elimination activity is K61. DNA is bound by residues H103, R122, and R164. Residues 250 to 284 (NAYAQTGEPCGRCGTLIIRESFMNRGSHYCPNCQK) form an FPG-type zinc finger. The active-site Proton donor; for delta-elimination activity is the R274.

This sequence belongs to the FPG family. In terms of assembly, monomer. Zn(2+) serves as cofactor.

It catalyses the reaction Hydrolysis of DNA containing ring-opened 7-methylguanine residues, releasing 2,6-diamino-4-hydroxy-5-(N-methyl)formamidopyrimidine.. The catalysed reaction is 2'-deoxyribonucleotide-(2'-deoxyribose 5'-phosphate)-2'-deoxyribonucleotide-DNA = a 3'-end 2'-deoxyribonucleotide-(2,3-dehydro-2,3-deoxyribose 5'-phosphate)-DNA + a 5'-end 5'-phospho-2'-deoxyribonucleoside-DNA + H(+). Involved in base excision repair of DNA damaged by oxidation or by mutagenic agents. Acts as a DNA glycosylase that recognizes and removes damaged bases. Has a preference for oxidized purines, such as 7,8-dihydro-8-oxoguanine (8-oxoG). Has AP (apurinic/apyrimidinic) lyase activity and introduces nicks in the DNA strand. Cleaves the DNA backbone by beta-delta elimination to generate a single-strand break at the site of the removed base with both 3'- and 5'-phosphates. The chain is Formamidopyrimidine-DNA glycosylase from Corynebacterium glutamicum (strain ATCC 13032 / DSM 20300 / JCM 1318 / BCRC 11384 / CCUG 27702 / LMG 3730 / NBRC 12168 / NCIMB 10025 / NRRL B-2784 / 534).